A 158-amino-acid polypeptide reads, in one-letter code: MKFLILALCVAAAMAGPSGDQIAAAKASWNTVKNNQVDILYAVFKANPDIQTAFSQFAGKDLDSIKGTPDFSKHAGRVVGLFSEVMDLLGNDANTPTILAKAKDFGKSHKSRASPAQLDNFRKSLVVYLKGATKWDSAVESSWAPVLDFVFSTLKNEL.

A signal peptide spans 1–15 (MKFLILALCVAAAMA). A Globin domain is found at 16-158 (GPSGDQIAAA…FVFSTLKNEL (143 aa)). Residues H74 and H109 each coordinate heme b.

It belongs to the globin family. As to quaternary structure, monomer.

This is Globin CTT-I/CTT-IA (CTT-1) from Chironomus thummi thummi (Midge).